Reading from the N-terminus, the 189-residue chain is UPF0301 protein PputGB1_5045 (189 aa).

This sequence belongs to the UPF0301 (AlgH) family.

The chain is UPF0301 protein PputGB1_5045 from Pseudomonas putida (strain GB-1).